The chain runs to 403 residues: G2/mitotic-specific cyclin-B3 (403 aa).

Disordered regions lie at residues 1–86 (MPVA…APPA) and 102–122 (RKTP…PEEP). Residues 7–25 (SKAQSSKQPRASKAPSVTE) are compositionally biased toward polar residues. The D-box signature appears at 51–59 (RSAFGDITN).

The protein belongs to the cyclin family. Cyclin AB subfamily. In terms of assembly, interacts with the CDK1 and CDK2 protein kinases. Ubiquitinated, leading to its degradation.

It is found in the nucleus. Cyclins are positive regulatory subunits of the cyclin-dependent kinases (CDKs), and thereby play an essential role in the control of the cell cycle, notably via their destruction during cell division. Could be involved at the G2/M (mitosis or meiosis) transition. G2/M cyclins accumulate steadily during G2 and are abruptly destroyed at mitosis. The sequence is that of G2/mitotic-specific cyclin-B3 (CCNB3) from Gallus gallus (Chicken).